Consider the following 251-residue polypeptide: uncharacterized protein (251 aa).

Belongs to the chlamydial CPn_0206/CT_203/TC_0475 family.

This is an uncharacterized protein from Chlamydia trachomatis serovar D (strain ATCC VR-885 / DSM 19411 / UW-3/Cx).